The sequence spans 733 residues: Photosystem I P700 chlorophyll a apoprotein A2 (733 aa).

Helical transmembrane passes span Ile-46 to Ala-69, Leu-134 to Gln-157, Leu-174 to Ile-198, Met-272 to Tyr-290, Leu-329 to Tyr-352, Ala-368 to Val-394, Ala-416 to His-438, and Phe-516 to Val-534. Residues Cys-558 and Cys-567 each coordinate [4Fe-4S] cluster. 2 helical membrane-spanning segments follow: residues Ala-574–Trp-595 and Leu-642–Ile-664. The chlorophyll a site is built by His-653, Met-661, and Tyr-669. Trp-670 lines the phylloquinone pocket. Residues Leu-706–Ala-726 traverse the membrane as a helical segment.

Belongs to the PsaA/PsaB family. As to quaternary structure, the PsaA/B heterodimer binds the P700 chlorophyll special pair and subsequent electron acceptors. PSI consists of a core antenna complex that captures photons, and an electron transfer chain that converts photonic excitation into a charge separation. The eukaryotic PSI reaction center is composed of at least 11 subunits. The cofactor is P700 is a chlorophyll a/chlorophyll a' dimer, A0 is one or more chlorophyll a, A1 is one or both phylloquinones and FX is a shared 4Fe-4S iron-sulfur center..

The protein localises to the plastid. It localises to the chloroplast thylakoid membrane. The catalysed reaction is reduced [plastocyanin] + hnu + oxidized [2Fe-2S]-[ferredoxin] = oxidized [plastocyanin] + reduced [2Fe-2S]-[ferredoxin]. In terms of biological role, psaA and PsaB bind P700, the primary electron donor of photosystem I (PSI), as well as the electron acceptors A0, A1 and FX. PSI is a plastocyanin/cytochrome c6-ferredoxin oxidoreductase, converting photonic excitation into a charge separation, which transfers an electron from the donor P700 chlorophyll pair to the spectroscopically characterized acceptors A0, A1, FX, FA and FB in turn. Oxidized P700 is reduced on the lumenal side of the thylakoid membrane by plastocyanin or cytochrome c6. This Thalassiosira pseudonana (Marine diatom) protein is Photosystem I P700 chlorophyll a apoprotein A2.